The sequence spans 261 residues: Chloroplastic import inner membrane translocase subunit HP30-1 (261 aa).

A run of 4 helical transmembrane segments spans residues 59 to 77 (AAVVSTMSGVQGAFIGGLM), 113 to 129 (NFAAITGVNAGIASVMK), 139 to 155 (SAVVAALGSGFAYSLVS), and 163 to 180 (MNAITTAAGFAVFQGVFF).

It belongs to the Tim17/Tim22/Tim23 family. Probable component of a protein-conducting channel made of HP30-1, HP30-2 and HP20 that mediates the import of transit sequence-less proteins into the chloroplastic inner membrane. Interacts with CEQORH.

It localises to the plastid. The protein resides in the chloroplast inner membrane. Together with HP30-2 and HP20, triggers the import and insertion of transit sequence-less multi-pass transmembrane proteins (e.g. CEQORH) into the chloroplastic inner membrane. This Arabidopsis thaliana (Mouse-ear cress) protein is Chloroplastic import inner membrane translocase subunit HP30-1.